A 498-amino-acid chain; its full sequence is MLYLLALVTVLAGLLHYYFTRTFNYWKKRNVAGPKPVPFFGNLKDSVLRRKPQVMVYKSIYDEFPNEKVVGIYRMTTPSVLLRDLDIIKHVLIKDFESFADRGVEFSLDGLGANIFHADGDRWRSLRNRFTPLFTSGKLKSMLPLMSQVGDRFINSIDEVSQTQPEQSIHNLVQKFTMTNIAACVFGLNLDEGMLKTLEDLDKHIFTVNYSAELDMMYPGILKKLNGSLFPKVVSKFFDNLTKNVLEMRKGTPSYQKDMIDLIQELREKKTLELSRKHENEDVKALELTDGVISAQMFIFYMAGYETSATTMTYLFYELAKNPDIQDKLIAEIDEVLSRHDGNITYECLSEMTYLSKVFDETLRKYPVADFTQRNAKTDYVFPGTDITIKKGQTIIVSTWGIQNDPKYYPNPEKFDPERFNPENVKDRHPCAYLPFSAGPRNCLGMRFAKWQSEVCIMKVLSKYRVEPSMKSSGPFKFDPMRLFALPKGGIYVNLVRR.

Heme is bound at residue cysteine 443.

It belongs to the cytochrome P450 family. It depends on heme as a cofactor. In terms of tissue distribution, midgut microsome.

The protein localises to the endoplasmic reticulum membrane. The protein resides in the microsome membrane. The enzyme catalyses an organic molecule + reduced [NADPH--hemoprotein reductase] + O2 = an alcohol + oxidized [NADPH--hemoprotein reductase] + H2O + H(+). Enables the insect to feed on furanocoumarin-producing plants and evolved as an adaptation for detoxification of xanthotoxin and other furanocoumarins. The sequence is that of Cytochrome P450 6B1 (CYP6B1) from Papilio polyxenes (Black swallowtail butterfly).